Consider the following 309-residue polypeptide: Cytochrome c1, heme protein, mitochondrial (309 aa).

The N-terminal 61 residues, 1–61 (MFSNLSKRWA…LYADSLTAEA (61 aa)), are a transit peptide targeting the mitochondrion. Residues 62-262 (MTAAEHGLHA…TFLNWCAEPE (201 aa)) are Mitochondrial intermembrane-facing. The region spanning 88–241 (ASIRRGYQVY…DMVEYEDGTP (154 aa)) is the Cytochrome c domain. Residues cysteine 101, cysteine 104, and histidine 105 each contribute to the heme c site. Over residues 131–140 (EFEYDDEPDE) the composition is skewed to acidic residues. Residues 131 to 168 (EFEYDDEPDEQGNPKKRPGKLSDYIPGPYPNEQAARAA) are disordered. Residue methionine 225 coordinates heme c. The chain crosses the membrane as a helical span at residues 263–296 (HDERKRLGLKTVIILSSLYLLSIWVKKFKWAGIK). Residues 297–309 (TRKFVFNPPKPRK) are Mitochondrial matrix-facing.

Belongs to the cytochrome c family. In terms of assembly, component of the ubiquinol-cytochrome c oxidoreductase (cytochrome b-c1 complex, complex III, CIII), a multisubunit enzyme composed of 10 subunits. The complex is composed of 3 respiratory subunits cytochrome b (COB), cytochrome c1 (CYT1) and Rieske protein (RIP1), 2 core protein subunits COR1 and QCR2, and 5 low-molecular weight protein subunits QCR6, QCR7, QCR8, QCR9 and QCR10. The complex exists as an obligatory dimer and forms supercomplexes (SCs) in the inner mitochondrial membrane with a monomer or a dimer of cytochrome c oxidase (complex IV, CIV), resulting in 2 different assemblies (supercomplexes III(2)IV and III(2)IV(2)). CYT1 interacts with COX5A at the CIII-CIV interface. Requires heme c as cofactor.

Its subcellular location is the mitochondrion inner membrane. It catalyses the reaction a quinol + 2 Fe(III)-[cytochrome c](out) = a quinone + 2 Fe(II)-[cytochrome c](out) + 2 H(+)(out). Component of the ubiquinol-cytochrome c oxidoreductase, a multisubunit transmembrane complex that is part of the mitochondrial electron transport chain which drives oxidative phosphorylation. The respiratory chain contains 3 multisubunit complexes succinate dehydrogenase (complex II, CII), ubiquinol-cytochrome c oxidoreductase (cytochrome b-c1 complex, complex III, CIII) and cytochrome c oxidase (complex IV, CIV), that cooperate to transfer electrons derived from NADH and succinate to molecular oxygen, creating an electrochemical gradient over the inner membrane that drives transmembrane transport and the ATP synthase. The cytochrome b-c1 complex catalyzes electron transfer from ubiquinol to cytochrome c, linking this redox reaction to translocation of protons across the mitochondrial inner membrane, with protons being carried across the membrane as hydrogens on the quinol. In the process called Q cycle, 2 protons are consumed from the matrix, 4 protons are released into the intermembrane space and 2 electrons are passed to cytochrome c. Cytochrome c1 is a catalytic core subunit containing a c-type heme. It transfers electrons from the [2Fe-2S] iron-sulfur cluster of the Rieske protein to cytochrome c. The protein is Cytochrome c1, heme protein, mitochondrial (CYT1) of Saccharomyces cerevisiae (strain ATCC 204508 / S288c) (Baker's yeast).